Here is a 298-residue protein sequence, read N- to C-terminus: N-acetylmuramic acid 6-phosphate etherase (298 aa).

Residues 55–218 (IHAQVSGGGR…STGLMIKSGK (164 aa)) enclose the SIS domain. Glu-83 functions as the Proton donor in the catalytic mechanism. Glu-114 is an active-site residue.

It belongs to the GCKR-like family. MurNAc-6-P etherase subfamily. As to quaternary structure, homodimer.

It catalyses the reaction N-acetyl-D-muramate 6-phosphate + H2O = N-acetyl-D-glucosamine 6-phosphate + (R)-lactate. It participates in amino-sugar metabolism; 1,6-anhydro-N-acetylmuramate degradation. Its pathway is amino-sugar metabolism; N-acetylmuramate degradation. The protein operates within cell wall biogenesis; peptidoglycan recycling. Functionally, specifically catalyzes the cleavage of the D-lactyl ether substituent of MurNAc 6-phosphate, producing GlcNAc 6-phosphate and D-lactate. Together with AnmK, is also required for the utilization of anhydro-N-acetylmuramic acid (anhMurNAc) either imported from the medium or derived from its own cell wall murein, and thus plays a role in cell wall recycling. This chain is N-acetylmuramic acid 6-phosphate etherase, found in Escherichia coli O7:K1 (strain IAI39 / ExPEC).